The sequence spans 414 residues: 3-oxo-tetronate kinase (414 aa).

ATP-binding positions include Ser255, 355-358, and Gly398; that span reads GGET.

Belongs to the four-carbon acid sugar kinase family.

The enzyme catalyses 3-dehydro-L-erythronate + ATP = 3-dehydro-4-O-phospho-L-erythronate + ADP + H(+). The catalysed reaction is 3-dehydro-D-erythronate + ATP = 3-dehydro-4-O-phospho-D-erythronate + ADP + H(+). Catalyzes the ATP-dependent phosphorylation of 3-oxo-tetronate to 3-oxo-tetronate 4-phosphate. This chain is 3-oxo-tetronate kinase, found in Actinobacillus succinogenes (strain ATCC 55618 / DSM 22257 / CCUG 43843 / 130Z).